A 463-amino-acid chain; its full sequence is Glutamate--tRNA ligase 1 (463 aa).

Positions 10 to 20 (PSPTGYLHIGG) match the 'HIGH' region motif. The short motif at 238-242 (KLSKR) is the 'KMSKS' region element. K241 serves as a coordination point for ATP.

This sequence belongs to the class-I aminoacyl-tRNA synthetase family. Glutamate--tRNA ligase type 1 subfamily. Monomer.

Its subcellular location is the cytoplasm. It carries out the reaction tRNA(Glu) + L-glutamate + ATP = L-glutamyl-tRNA(Glu) + AMP + diphosphate. Catalyzes the attachment of glutamate to tRNA(Glu) in a two-step reaction: glutamate is first activated by ATP to form Glu-AMP and then transferred to the acceptor end of tRNA(Glu). The polypeptide is Glutamate--tRNA ligase 1 (Helicobacter pylori (strain Shi470)).